A 294-amino-acid chain; its full sequence is Nucleotide-binding protein Reut_A0350 (294 aa).

8 to 15 contributes to the ATP binding site; it reads GISGSGKS. 57-60 serves as a coordination point for GTP; the sequence is DIRS.

The protein belongs to the RapZ-like family.

Its function is as follows. Displays ATPase and GTPase activities. This chain is Nucleotide-binding protein Reut_A0350, found in Cupriavidus pinatubonensis (strain JMP 134 / LMG 1197) (Cupriavidus necator (strain JMP 134)).